Consider the following 220-residue polypeptide: 7-cyano-7-deazaguanine synthase (220 aa).

7 to 17 serves as a coordination point for ATP; the sequence is LSGGMDSSTLA. Residues C187, C195, C198, and C201 each coordinate Zn(2+).

This sequence belongs to the QueC family. Zn(2+) serves as cofactor.

The enzyme catalyses 7-carboxy-7-deazaguanine + NH4(+) + ATP = 7-cyano-7-deazaguanine + ADP + phosphate + H2O + H(+). It functions in the pathway purine metabolism; 7-cyano-7-deazaguanine biosynthesis. Functionally, catalyzes the ATP-dependent conversion of 7-carboxy-7-deazaguanine (CDG) to 7-cyano-7-deazaguanine (preQ(0)). The chain is 7-cyano-7-deazaguanine synthase from Methanospirillum hungatei JF-1 (strain ATCC 27890 / DSM 864 / NBRC 100397 / JF-1).